Reading from the N-terminus, the 450-residue chain is Tubulin alpha-5 chain (450 aa).

Residues Q11, E71, G144, T145, T179, N206, and N228 each contribute to the GTP site. E71 contributes to the Mg(2+) binding site. Residue E254 is part of the active site. Phosphothreonine is present on T349. The segment at 429-450 (EKDYEEVGAEGGDDEEDEGEDY) is disordered. The span at 431-450 (DYEEVGAEGGDDEEDEGEDY) shows a compositional bias: acidic residues.

Belongs to the tubulin family. In terms of assembly, dimer of alpha and beta chains. A typical microtubule is a hollow water-filled tube with an outer diameter of 25 nm and an inner diameter of 15 nM. Alpha-beta heterodimers associate head-to-tail to form protofilaments running lengthwise along the microtubule wall with the beta-tubulin subunit facing the microtubule plus end conferring a structural polarity. Microtubules usually have 13 protofilaments but different protofilament numbers can be found in some organisms and specialized cells. Mg(2+) is required as a cofactor. Post-translationally, undergoes a tyrosination/detyrosination cycle, the cyclic removal and re-addition of a C-terminal tyrosine residue by the enzymes tubulin tyrosine carboxypeptidase (TTCP) and tubulin tyrosine ligase (TTL), respectively.

Its subcellular location is the cytoplasm. The protein resides in the cytoskeleton. The catalysed reaction is GTP + H2O = GDP + phosphate + H(+). In terms of biological role, tubulin is the major constituent of microtubules, a cylinder consisting of laterally associated linear protofilaments composed of alpha- and beta-tubulin heterodimers. Microtubules grow by the addition of GTP-tubulin dimers to the microtubule end, where a stabilizing cap forms. Below the cap, tubulin dimers are in GDP-bound state, owing to GTPase activity of alpha-tubulin. The sequence is that of Tubulin alpha-5 chain (TUBA5) from Arabidopsis thaliana (Mouse-ear cress).